Consider the following 417-residue polypeptide: Gamma-glutamyl phosphate reductase (417 aa).

The protein belongs to the gamma-glutamyl phosphate reductase family.

It localises to the cytoplasm. It carries out the reaction L-glutamate 5-semialdehyde + phosphate + NADP(+) = L-glutamyl 5-phosphate + NADPH + H(+). It functions in the pathway amino-acid biosynthesis; L-proline biosynthesis; L-glutamate 5-semialdehyde from L-glutamate: step 2/2. Functionally, catalyzes the NADPH-dependent reduction of L-glutamate 5-phosphate into L-glutamate 5-semialdehyde and phosphate. The product spontaneously undergoes cyclization to form 1-pyrroline-5-carboxylate. This Desulfitobacterium hafniense (strain Y51) protein is Gamma-glutamyl phosphate reductase.